Here is a 533-residue protein sequence, read N- to C-terminus: Peptide chain release factor 3 (533 aa).

In terms of domain architecture, tr-type G spans 9–284; sequence ARRRTFAIIS…ALCELSPPPL (276 aa). GTP-binding positions include 18–25, 95–99, and 149–152; these read SHPDAGKT, DTPGH, and NKLD.

Belongs to the TRAFAC class translation factor GTPase superfamily. Classic translation factor GTPase family. PrfC subfamily.

It localises to the cytoplasm. Its function is as follows. Increases the formation of ribosomal termination complexes and stimulates activities of RF-1 and RF-2. It binds guanine nucleotides and has strong preference for UGA stop codons. It may interact directly with the ribosome. The stimulation of RF-1 and RF-2 is significantly reduced by GTP and GDP, but not by GMP. The polypeptide is Peptide chain release factor 3 (Cupriavidus necator (strain ATCC 17699 / DSM 428 / KCTC 22496 / NCIMB 10442 / H16 / Stanier 337) (Ralstonia eutropha)).